Reading from the N-terminus, the 874-residue chain is Coatomer subunit gamma-1 (874 aa).

Over residues 1-11 the composition is skewed to basic and acidic residues; sequence MLKKFDKKDEE. The segment at 1-21 is disordered; that stretch reads MLKKFDKKDEESGGGSNPFQH. 4 HEAT repeats span residues 64 to 101, 283 to 320, 322 to 355, and 356 to 392; these read TEAT…IAED, KELA…KHPS, VTAC…GSEG, and SIDR…KYPR. A Phosphothreonine modification is found at Thr594. An interaction with ZNF289/ARFGAP2 region spans residues 609 to 874; it reads RQEIFQEQLA…PVDIVLASVG (266 aa).

The protein belongs to the COPG family. As to quaternary structure, oligomeric complex that consists of at least the alpha, beta, beta', gamma, delta, epsilon and zeta subunits. Interacts with ZNF289/ARFGAP2 through its C-terminal appendage domain. Interacts with EGFR upon EGF treatment; interaction is essential for regulation of EGF-dependent nuclear transport of EGFR by retrograde trafficking from the Golgi to the ER. The coatomer interacts with KDEL receptors; the interaction is important for retrograde trafficking of KDEL-bearing proteins from the Golgi to the endoplasmic reticulum. Interacts with COPB1. Interacts with TMED10 (via C-terminus). Interacts with TMED2, TMED3, TMED7 and TMED9.

It is found in the cytoplasm. The protein localises to the cytosol. Its subcellular location is the golgi apparatus membrane. The protein resides in the cytoplasmic vesicle. It localises to the COPI-coated vesicle membrane. The coatomer is a cytosolic protein complex that binds to dilysine motifs and reversibly associates with Golgi non-clathrin-coated vesicles, which further mediate biosynthetic protein transport from the ER, via the Golgi up to the trans Golgi network. Coatomer complex is required for budding from Golgi membranes, and is essential for the retrograde Golgi-to-ER transport of dilysine-tagged proteins. In mammals, the coatomer can only be recruited by membranes associated to ADP-ribosylation factors (ARFs), which are small GTP-binding proteins; the complex also influences the Golgi structural integrity, as well as the processing, activity, and endocytic recycling of LDL receptors. Required for limiting lipid storage in lipid droplets. Involved in lipid homeostasis by regulating the presence of perilipin family members PLIN2 and PLIN3 at the lipid droplet surface and promoting the association of adipocyte triglyceride lipase (PNPLA2) with the lipid droplet surface to mediate lipolysis. This chain is Coatomer subunit gamma-1 (COPG1), found in Bos taurus (Bovine).